The chain runs to 102 residues: Small ribosomal subunit protein uS10 (102 aa).

It belongs to the universal ribosomal protein uS10 family. Part of the 30S ribosomal subunit.

In terms of biological role, involved in the binding of tRNA to the ribosomes. This is Small ribosomal subunit protein uS10 from Thermosipho africanus (strain TCF52B).